Consider the following 197-residue polypeptide: Putative eggshell protein (197 aa).

The signal sequence occupies residues 1 to 17 (MKFHLVLLLAIVPLTLA).

This Fasciola hepatica (Liver fluke) protein is Putative eggshell protein.